A 194-amino-acid polypeptide reads, in one-letter code: CD-NTase-associated protein 15 (194 aa).

Positions methionine 1 to aspartate 73 are required for cell toxicity. Transmembrane regions (helical) follow at residues isoleucine 15–valine 35 and isoleucine 43–isoleucine 63.

Belongs to the CBASS Cap15 membrane effector family. As to quaternary structure, the beta barrel domain oligomerizes; in the presence of cyclic nucleotides (probably 3',3'-cGAMP, but the cognate CD-NTase makes at least 4 other cyclic nucleotides) higher-level oligomers are detected.

The protein localises to the cell inner membrane. Effector protein of a CBASS antivirus system. CBASS (cyclic oligonucleotide-based antiphage signaling system) provides immunity against bacteriophages. The CD-NTase protein (CdnB) synthesizes cyclic nucleotides in response to infection; these serve as specific second messenger signals. The signals activate a diverse range of effectors, leading to bacterial cell death and thus abortive phage infection. Causes cell death in response to 3',3'-cGAMP upon coexpression in E.coli with V.cholerae DncV; inactivating DncV prevents cell death. Upon induction in E.coli with non-cognate DncV, the cell inner membrane shrinks and separates from the cell wall with a concomitant increase in the periplasm. Binds cyclic nucleotide second messenger 3',3'-cGAMP, probably oligomerizing, and induces cell membrane shrinkage and rupture, leading to cell death. A type I CBASS system. Its function is as follows. Protects E.coli against phage infection. When the CBASS operon (cdnB-cap15) is introduced in E.coli MG1655 there is about 100-fold protection against phage T2 and about 10-fold protection against phage T5 and T6. The sequence is that of CD-NTase-associated protein 15 from Escherichia albertii.